The sequence spans 366 residues: Growth/differentiation factor 3 (366 aa).

The first 22 residues, 1–22 (MQPYQRLLALGFLLLTLPWGQT), serve as a signal peptide directing secretion. Positions 23–252 (SEFQDSDLLQ…HCHPSSRKRR (230 aa)) are excised as a propeptide. Asn113 and Asn308 each carry an N-linked (GlcNAc...) asparagine glycan. 3 cysteine pairs are disulfide-bonded: Cys266–Cys331, Cys295–Cys363, and Cys299–Cys365.

Belongs to the TGF-beta family. Homodimer. Heterodimer (Potential). But, in contrast to other members of this family, cannot be disulfide-linked. Synthesized as large precursor molecule that undergo proteolytic cleavage, releasing the pro-domain from the active, receptor binding, C-terminal region of the molecule. As to expression, primarily in adult bone marrow, spleen, thymus and adipose tissue.

It localises to the secreted. It is found in the cytoplasm. In terms of biological role, growth factor involved in early embryonic development and adipose-tissue homeostasis. During embryogenesis controls formation of anterior visceral endoderm and mesoderm and the establishment of anterior-posterior identity through a receptor complex comprising the receptor ACVR1B and the coreceptor CRIPTO. Regulates adipose-tissue homeostasis and energy balance under nutrient overload in part by signaling through the receptor complex based on ACVR1C and CRIPTO. This is Growth/differentiation factor 3 (Gdf3) from Mus musculus (Mouse).